The chain runs to 725 residues: N-alpha-acetyltransferase 35, NatC auxiliary subunit (725 aa).

At Ser-187 the chain carries Phosphoserine. Positions 548–573 (ERIMEEQQKGRSSKKTKKKKKVRPLS) are disordered. A compositionally biased stretch (basic residues) spans 558-571 (RSSKKTKKKKKVRP).

It belongs to the MAK10 family. Component of the N-terminal acetyltransferase C (NatC) complex, which is composed of NAA35, NAA38 and NAA30.

Its subcellular location is the cytoplasm. Functionally, auxillary component of the N-terminal acetyltransferase C (NatC) complex which catalyzes acetylation of N-terminal methionine residues. N-terminal acetylation protects proteins from ubiquitination and degradation by the N-end rule pathway. Involved in regulation of apoptosis and proliferation of smooth muscle cells. The polypeptide is N-alpha-acetyltransferase 35, NatC auxiliary subunit (NAA35) (Homo sapiens (Human)).